The following is an 844-amino-acid chain: Aminopeptidase N (844 aa).

Residues E120 and 253–257 (GAMEN) contribute to the substrate site. A Zn(2+)-binding site is contributed by H289. The active-site Proton acceptor is the E290. Positions 293 and 312 each coordinate Zn(2+).

Belongs to the peptidase M1 family. In terms of assembly, monomer. Zn(2+) serves as cofactor.

The protein localises to the cytoplasm. The catalysed reaction is Release of an N-terminal amino acid, Xaa-|-Yaa- from a peptide, amide or arylamide. Xaa is preferably Ala, but may be most amino acids including Pro (slow action). When a terminal hydrophobic residue is followed by a prolyl residue, the two may be released as an intact Xaa-Pro dipeptide.. Aminopeptidase N is involved in the degradation of intracellular peptides generated by protein breakdown during normal growth as well as in response to nutrient starvation. This chain is Aminopeptidase N (pepN), found in Lactobacillus helveticus (Lactobacillus suntoryeus).